A 500-amino-acid polypeptide reads, in one-letter code: MSYFPWLTIIVVLPIFAGSSIFFFPHRGNKVVRWYTICICLLELLLTTYAFCYHFQLDDPLIQLEEDYKWINIFDFHWRLGIDGLSIGPILLTGFITTLATLAARPVTRDSRLFHFLMLAMYSGQIGSFSSRDLLLFFIMWELELIPVYLLLSMWGGKKRLYSATKFILYTAGGSIFLLMGVPGMGLYGSNEPILNFETSANQSYPLALEIIFYFGFLIAYAVKSPIIPLHTWLPDTHGEAHYSTCMLLAGILLKMGAYGLVRINMELLPHAHSIFSPWLMIVGTIQIIYAASTSSGQSNLKKRIAYSSVSHMGFTIIGIGSITDTGLNGAILQIISHGFIGAALFFLAGTSYDRIRLVYLDEMGGIAIPMPKIFTMFSSFSMASLALPGMSGFVAESVVFWGIITSPKYLLMPKILITFVMAIGMILTPIYSLSMSRQMFYGYKLFNVPNSYFLDSGPRELFVSICIFLPVIGIGIYPDFVLSLSVDKVEAILANYFYK.

The next 14 membrane-spanning stretches (helical) occupy residues 4 to 24 (FPWL…IFFF), 37 to 57 (ICIC…HFQL), 84 to 104 (GLSI…TLAA), 111 to 129 (SRLF…IGSF), 134 to 154 (LLLF…LLSM), 167 to 187 (FILY…GMGL), 208 to 228 (ALEI…SPII), 242 to 262 (HYST…YGLV), 272 to 292 (AHSI…IYAA), 305 to 325 (IAYS…SITD), 330 to 350 (GAIL…FLAG), 374 to 396 (IFTM…GFVA), 416 to 436 (ILIT…SLSM), and 462 to 482 (LFVS…PDFV).

This sequence belongs to the complex I subunit 4 family.

The protein resides in the plastid. Its subcellular location is the chloroplast thylakoid membrane. The enzyme catalyses a plastoquinone + NADH + (n+1) H(+)(in) = a plastoquinol + NAD(+) + n H(+)(out). The catalysed reaction is a plastoquinone + NADPH + (n+1) H(+)(in) = a plastoquinol + NADP(+) + n H(+)(out). This chain is NAD(P)H-quinone oxidoreductase chain 4, chloroplastic, found in Liriodendron tulipifera (Tuliptree).